The primary structure comprises 226 residues: Probable functional amyloid protease FapD (226 aa).

A signal peptide spans 1–18 (MRTLILSLLLLVDLTTQA). Positions 50–180 (QKTDFSCGAA…KGWNGIVFAV (131 aa)) constitute a Peptidase C39 domain. Cys56 is a catalytic residue.

The protein belongs to the FapD family.

The protein resides in the periplasm. Functionally, probable protease that might be involved in processing fibril precursors. Upon overexpression of the endogenous six-gene locus (fapA-fapF), cells form large clumps during liquid growth, make large amounts of biofilm and produce amyloid fibrils. This is Probable functional amyloid protease FapD from Pseudomonas aeruginosa (strain ATCC 15692 / DSM 22644 / CIP 104116 / JCM 14847 / LMG 12228 / 1C / PRS 101 / PAO1).